A 269-amino-acid polypeptide reads, in one-letter code: MVDMKQRILTGVLAAIVFLFLVIVGKLPFTILIYAMGSVALFELLRMKKLKLVSLPGLIGLLLLWMFLLPSQYSFFEADGISKMEIALFAVLLLLTYTVLVKNTFTFDEVGFITLAAIYIGMCFHYFIEIRNLDQYGLTYIFYACVVIWSTDSGAYFVGKSLGKRKLWPEISPNKTVEGFAGGIVIALVLATIFQLVAQLPIPYIYLLLITLFLSVFGQLGDLVESALKRHYDVKDSGNILPGHGGILDRFDSFLFVMPFLYFLLALFS.

A run of 8 helical transmembrane segments spans residues 13–33 (LAAIVFLFLVIVGKLPFTILI), 50–70 (LKLVSLPGLIGLLLLWMFLLP), 81–101 (ISKMEIALFAVLLLLTYTVLV), 110–130 (VGFITLAAIYIGMCFHYFIEI), 138–158 (LTYIFYACVVIWSTDSGAYFV), 180–200 (FAGGIVIALVLATIFQLVAQL), 201–221 (PIPYIYLLLITLFLSVFGQLG), and 247–267 (ILDRFDSFLFVMPFLYFLLAL).

The protein belongs to the CDS family.

It is found in the cell membrane. It catalyses the reaction a 1,2-diacyl-sn-glycero-3-phosphate + CTP + H(+) = a CDP-1,2-diacyl-sn-glycerol + diphosphate. The protein operates within phospholipid metabolism; CDP-diacylglycerol biosynthesis; CDP-diacylglycerol from sn-glycerol 3-phosphate: step 3/3. This Bacillus subtilis (strain 168) protein is Phosphatidate cytidylyltransferase (cdsA).